An 891-amino-acid polypeptide reads, in one-letter code: Alanine--tRNA ligase (891 aa).

Residues histidine 564, histidine 568, cysteine 678, and histidine 682 each coordinate Zn(2+).

This sequence belongs to the class-II aminoacyl-tRNA synthetase family. It depends on Zn(2+) as a cofactor.

The protein localises to the cytoplasm. It carries out the reaction tRNA(Ala) + L-alanine + ATP = L-alanyl-tRNA(Ala) + AMP + diphosphate. In terms of biological role, catalyzes the attachment of alanine to tRNA(Ala) in a two-step reaction: alanine is first activated by ATP to form Ala-AMP and then transferred to the acceptor end of tRNA(Ala). Also edits incorrectly charged Ser-tRNA(Ala) and Gly-tRNA(Ala) via its editing domain. The chain is Alanine--tRNA ligase from Nitrobacter winogradskyi (strain ATCC 25391 / DSM 10237 / CIP 104748 / NCIMB 11846 / Nb-255).